Reading from the N-terminus, the 226-residue chain is uncharacterized protein (226 aa).

Positions 121–163 (TVDELIKTIEKELNKVKKSRKNREKKTNEVEEIIEELIEEDDI) form a coiled coil.

This is an uncharacterized protein from Methanocaldococcus jannaschii (strain ATCC 43067 / DSM 2661 / JAL-1 / JCM 10045 / NBRC 100440) (Methanococcus jannaschii).